The primary structure comprises 457 residues: Metal tolerance protein C4 (457 aa).

At 1–115 the chain is on the cytoplasmic side; it reads MQSSHRILSR…IEINDQHSQR (115 aa). A helical membrane pass occupies residues 116 to 136; sequence AVTTALWCNFLVFSLKFGVWW. Topologically, residues 137–141 are vacuolar; sequence TSSSH. A helical membrane pass occupies residues 142–162; it reads VIMAEVVHSVADFANQALLAY. Residues 163-183 are Cytoplasmic-facing; that stretch reads GLSSSRRAPDALHPYGYSKER. Residues 184–204 form a helical membrane-spanning segment; it reads FVWSLISAVGIFCLGSGATIV. Residues 205–220 lie on the Vacuolar side of the membrane; that stretch reads NGVQNLWTSSPPPNME. Residues 221-241 traverse the membrane as a helical segment; the sequence is LAAVVIGGSFLIEGASLLVAI. Over 242–267 the chain is Cytoplasmic; that stretch reads QSVKKGAAQEGMTIRDYIWRGHDPTS. The chain crosses the membrane as a helical span at residues 268–288; sequence VAVMTEDGAAVAGLAIAAASL. Topologically, residues 289 to 297 are vacuolar; sequence VAVRMTGNP. The helical transmembrane segment at 298 to 318 threads the bilayer; sequence IYDPIGSIVVGNLLGMVAIFL. Topologically, residues 319–457 are cytoplasmic; it reads IQRNRHALIG…HNPTPTDPSL (139 aa).

The protein belongs to the cation diffusion facilitator (CDF) transporter (TC 2.A.4) family.

The protein resides in the vacuole membrane. Involved in sequestration of excess metal in the cytoplasm into vacuoles to maintain metal homeostasis. The sequence is that of Metal tolerance protein C4 (MTPC4) from Arabidopsis thaliana (Mouse-ear cress).